Consider the following 268-residue polypeptide: Nuclear protein UL4 homolog (268 aa).

The protein belongs to the alphaherpesvirinae HHV-1 UL4 family.

The protein localises to the host nucleus. The sequence is that of Nuclear protein UL4 homolog (MDV016) from Gallid herpesvirus 2 (strain Chicken/Md5/ATCC VR-987) (GaHV-2).